Reading from the N-terminus, the 191-residue chain is UPF0669 protein C6orf120 (191 aa).

An N-terminal signal peptide occupies residues Met1–Ala30. Asn53 carries an N-linked (GlcNAc...) asparagine glycan.

It belongs to the UPF0669 family. Mainly expressed in hepatocytes and some weak expression in germinal center cells of lymph nodes.

Its subcellular location is the secreted. Its function is as follows. May be involved in induction of apoptosis in CD4(+) T-cells, but not CD8(+) T-cells or hepatocytes. This is UPF0669 protein C6orf120 (C6orf120) from Homo sapiens (Human).